The following is a 174-amino-acid chain: Cytochrome c-type biogenesis protein CcmE (174 aa).

At 1–8 (MNPRRKSR) the chain is on the cytoplasmic side. Residues 9–29 (LSVVLFIFLGISVASALVLYA) traverse the membrane as a helical; Signal-anchor for type II membrane protein segment. At 30-174 (LRQNIDLFYT…QEKQFKEGNQ (145 aa)) the chain is on the periplasmic side. Positions 131 and 135 each coordinate heme. The interval 149–174 (KPMGISDLKNESDRDRQEKQFKEGNQ) is disordered. The segment covering 156–174 (LKNESDRDRQEKQFKEGNQ) has biased composition (basic and acidic residues).

Belongs to the CcmE/CycJ family.

It is found in the cell inner membrane. Heme chaperone required for the biogenesis of c-type cytochromes. Transiently binds heme delivered by CcmC and transfers the heme to apo-cytochromes in a process facilitated by CcmF and CcmH. The chain is Cytochrome c-type biogenesis protein CcmE from Histophilus somni (strain 129Pt) (Haemophilus somnus).